We begin with the raw amino-acid sequence, 547 residues long: uncharacterized protein (547 aa).

The segment covering 38-50 has biased composition (basic and acidic residues); it reads RNLPFHREREKVE. A disordered region spans residues 38 to 89; that stretch reads RNLPFHREREKVESNPNSSDEEDLTSTNNTRSSDNTTSDTEDDSGEDSYQVE. Residues 62–75 are compositionally biased toward low complexity; it reads TSTNNTRSSDNTTS. 12 helical membrane passes run 108–128, 148–168, 174–194, 197–217, 233–253, 265–285, 346–366, 377–397, 418–438, 445–465, 478–500, and 514–534; these read IYTL…SSIF, LCSA…APLS, LPLY…GGCS, IWSL…PMSA, GALL…PVMG, WDFW…CFTM, MYLV…PLIF, GLAI…TPII, LFPL…LGWT, WAAP…VLAV, AASA…TIVA, and SLLA…FFWG.

This sequence belongs to the major facilitator superfamily. CAR1 family.

It localises to the membrane. This is an uncharacterized protein from Schizosaccharomyces pombe (strain 972 / ATCC 24843) (Fission yeast).